The chain runs to 276 residues: Large ribosomal subunit protein uL2 (276 aa).

Residues 223–276 are disordered; the sequence is GVAMNPVDHPHGGGEGRGKGHHPTSPWGLPTKGYKTRRGKRPSDKFIVRRRNEV. Basic and acidic residues-rich tracts occupy residues 230–240 and 263–276; these read DHPHGGGEGRG and RPSD…RNEV.

It belongs to the universal ribosomal protein uL2 family. Part of the 50S ribosomal subunit. Forms a bridge to the 30S subunit in the 70S ribosome.

One of the primary rRNA binding proteins. Required for association of the 30S and 50S subunits to form the 70S ribosome, for tRNA binding and peptide bond formation. It has been suggested to have peptidyltransferase activity; this is somewhat controversial. Makes several contacts with the 16S rRNA in the 70S ribosome. The chain is Large ribosomal subunit protein uL2 from Thermotoga maritima (strain ATCC 43589 / DSM 3109 / JCM 10099 / NBRC 100826 / MSB8).